The chain runs to 90 residues: Long neurotoxin 7 (90 aa).

An N-terminal signal peptide occupies residues 1–21 (MKTLLLTLVLVTIMCLDLGYT). Cystine bridges form between C24-C41, C35-C62, C47-C51, C66-C77, and C78-C83.

It belongs to the three-finger toxin family. Long-chain subfamily. Type II alpha-neurotoxin sub-subfamily. As to expression, expressed by the venom gland.

The protein resides in the secreted. Its function is as follows. Binds with high affinity to muscular (alpha-1/CHRNA1) and neuronal (alpha-7/CHRNA7) nicotinic acetylcholine receptor (nAChR) and inhibits acetylcholine from binding to the receptor, thereby impairing neuromuscular and neuronal transmission. This Naja sputatrix (Malayan spitting cobra) protein is Long neurotoxin 7.